A 528-amino-acid chain; its full sequence is Na(+)/H(+) antiporter NhaB (528 aa).

11 helical membrane passes run 29 to 49 (LIINPIVFYINPFVAGWLLVI), 52 to 72 (IFTLAMALKCYPLQPGGLLAI), 95 to 115 (VLLLLVFMVAGIYFMKQLLLF), 139 to 159 (AFLSAFLDALTVIAVIIAVAV), 203 to 223 (LLMHAGVGTALGGVCTMVGEP), 248 to 268 (VPVFFAGIFTCFLVEKFKIFG), 304 to 324 (AFIGIWLIVGLALHLASVGLI), 349 to 369 (EEALPFTALLAVFFAVVAVII), 390 to 410 (LVIFYIANGLLSMVSDNVFVG), 448 to 468 (ATPNGQAAFLFLLTSAIAPLI), and 476 to 496 (VWMALPYTIVLSIVGVLAIEL).

Belongs to the NhaB Na(+)/H(+) (TC 2.A.34) antiporter family.

The protein resides in the cell inner membrane. The catalysed reaction is 2 Na(+)(in) + 3 H(+)(out) = 2 Na(+)(out) + 3 H(+)(in). In terms of biological role, na(+)/H(+) antiporter that extrudes sodium in exchange for external protons. This is Na(+)/H(+) antiporter NhaB from Shewanella woodyi (strain ATCC 51908 / MS32).